Reading from the N-terminus, the 517-residue chain is Transmembrane protein 180 (517 aa).

At 1-11 (MRLGGPWAWLL) the chain is on the extracellular side. Residues 12 to 43 (GLPTAVVYGSLALFVSVLHNVFLLYYVDTFVS) form a helical membrane-spanning segment. At 44–55 (VYKIDKAAFWVG) the chain is on the cytoplasmic side. A helical transmembrane segment spans residues 56–74 (ETVFLLWNSLNDPLFGWLS). Over 75-100 (DRQFLSSQPRSGAGLSSRAVVLARVR) the chain is Extracellular. Residues 101 to 118 (ALGWHGPLLALSFLAFWV) form a helical membrane-spanning segment. The Cytoplasmic segment spans residues 119-126 (PWAPAGLQ). Residues 127-151 (FLLCLCLYDGFLTLVDLHHHALLAD) form a helical membrane-spanning segment. At 152-155 (LALS) the chain is on the extracellular side. Residues 156–179 (AHDRTHLNFYCSLFSAAGSLSVFA) traverse the membrane as a helical segment. At 180-191 (SYAFWNKEDFSS) the chain is on the cytoplasmic side. The chain crosses the membrane as a helical span at residues 192–223 (FRAFCLALATGSGLGFVGAARLLRRRVEAAGR). The Extracellular segment spans residues 224–264 (EPGCPAMAVNDGLCEEELLVGGEEAGSITLGQYLQQLARHR). A helical membrane pass occupies residues 265 to 292 (NFLWFVGMDLVQVFHCHFNSNFFPLFLE). At 293–305 (HLLSDHISLSTGS) the chain is on the cytoplasmic side. A helical membrane pass occupies residues 306 to 325 (FLLGISYVAPHLNNLYFLPL). Residues 326-330 (CRRWG) are Extracellular-facing. Residues 331-350 (VYAVVRGLFLLKLGLSLLML) traverse the membrane as a helical segment. Over 351-358 (LAGPDHPG) the chain is Cytoplasmic. The helical transmembrane segment at 359–393 (LLCLFIASNRVFTEGTCKLLTLVVTDLVDEDLVLN) threads the bilayer. Topologically, residues 394-402 (HRKQAASAL) are extracellular. A helical membrane pass occupies residues 403–429 (LFGMVALVTKPGQTFAPLLGTWLLCFY). Topologically, residues 430–466 (TGHDLFQQHPPAPVGSAQPWPEPPAPPPAQAPPLRQG) are cytoplasmic. The chain crosses the membrane as a helical span at residues 467 to 485 (CFYLLVLVPIACALLQLFT). Residues 486–517 (WSQFTLHGRRLHMVKAQRQSLSRAQTLDVKMV) are Extracellular-facing.

The protein localises to the cell membrane. This is Transmembrane protein 180 from Bos taurus (Bovine).